The chain runs to 1070 residues: Envelopment polyprotein (1070 aa).

The first 17 residues, 1–17, serve as a signal peptide directing secretion; that stretch reads MMFSRVMQLALICAVTC. Topologically, residues 18-457 are lumenal; that stretch reads EDNPCLWERF…SNPQCYPYGK (440 aa). 8 cysteine pairs are disulfide-bonded: cysteine 22-cysteine 55, cysteine 152-cysteine 165, cysteine 211-cysteine 221, cysteine 267-cysteine 309, cysteine 296-cysteine 301, cysteine 353-cysteine 356, cysteine 360-cysteine 429, and cysteine 380-cysteine 385. Residue asparagine 269 is glycosylated (N-linked (GlcNAc...) asparagine; by host). Residues 458–478 traverse the membrane as a helical segment; sequence WFLLFLILATLYIIVALLKTI. Residues 479 to 536 are Cytoplasmic-facing; it reads MRIFMACLSVLYGPFIIIIKISRCLGRLGKRKGERTYVRLMEALDDERKPEVVRAPVS. The tract at residues 480–522 is golgi retention signal; it reads RIFMACLSVLYGPFIIIIKISRCLGRLGKRKGERTYVRLMEAL. Residues 541–560 are internal signal sequence for glycoprotein C; sequence KQPRIVLFIVLALLVHMALC. Positions 550-560 are excised as a propeptide; sequence VLALLVHMALC. Over 550 to 1023 the chain is Lumenal; sequence VLALLVHMAL…NWLDTLFGAS (474 aa). Disulfide bonds link cysteine 561/cysteine 602, cysteine 574/cysteine 584, cysteine 642/cysteine 831, cysteine 648/cysteine 696, cysteine 654/cysteine 703, cysteine 659/cysteine 685, cysteine 689/cysteine 694, cysteine 799/cysteine 813, cysteine 896/cysteine 966, and cysteine 906/cysteine 909. Positions 648-654 are fusion loop; sequence CRWAGSC. Positions 690–701 are fusion loop; the sequence is GGAACGCFNAAP. A helical membrane pass occupies residues 1024–1044; the sequence is LLGKILGIGLAILSPFILILI. The Cytoplasmic segment spans residues 1045–1070; it reads LRWILRVVLRRSRIRREPKYEMAKYS.

The protein belongs to the phlebovirus envelope glycoprotein family. In terms of assembly, heterodimer with glycoprotein C. Heterodimer with glycoprotein N. Homotrimer (postfusion). In terms of processing, specific enzymatic cleavages in vivo yield mature proteins Glycoprotein C, and Glycoprotein N. Glycosylated. Post-translationally, palmitoylated.

It is found in the virion membrane. The protein resides in the host Golgi apparatus membrane. It localises to the host endoplasmic reticulum membrane. Functionally, structural component of the virion that interacts with glycoprotein C. It shields the hydrophobic fusion loops of the glycoprotein C, preventing premature fusion. The glycoprotein protrusions are arranged on an icosahedral lattice, with T=12 triangulation. They are able to attach the virion to the host cell receptor CD209/DC-SIGN and to promote fusion of membranes with the late endosome after endocytosis of the virion. Plays a role in the packaging of ribonucleoproteins during virus assembly. Structural component of the virion that interacts with glycoprotein N. Acts as a class II fusion protein that is activated upon acidification and subsequent repositioning of the glycoprotein N. The glycoprotein protrusions are arranged on an icosahedral lattice, with T=12 triangulation. They are able to attach the virion to the host cell receptor CD209/DC-SIGN and to promote fusion of membranes with the late endosome after endocytosis of the virion. This Amblyomma variegatum (Tropical bont tick) protein is Envelopment polyprotein (GP).